Here is a 261-residue protein sequence, read N- to C-terminus: Protein-ADP-ribose hydrolase (261 aa).

One can recognise a Macro domain in the interval 74-261 (ADLKPVTGRG…DEALYNKLMS (188 aa)). Asp-93, Ile-94, and Asn-107 together coordinate ADP-D-ribose. Residues Cys-113, His-118, and Cys-120 each contribute to the Zn(2+) site. Cys-120, Ile-121, Asp-122, Ser-211, Thr-212, Gly-213, and Phe-215 together coordinate ADP-D-ribose.

This sequence belongs to the MacroD-type family. Zn-Macro subfamily. Zn(2+) serves as cofactor.

The enzyme catalyses 4-O-(ADP-D-ribosyl)-L-aspartyl-[protein] + H2O = L-aspartyl-[protein] + ADP-D-ribose + H(+). In terms of biological role, ADP-ribosylhydrolase that specifically reverses the SirTM-mediated mono-ADP-ribosylation at an asparatate residue of GcvH-L, by releasing ADP-ribose from the target protein. May play a role in the regulation of the response to host-induced oxidative stress. This Treponema medium protein is Protein-ADP-ribose hydrolase.